We begin with the raw amino-acid sequence, 120 residues long: Large ribosomal subunit protein uL18 (120 aa).

The protein belongs to the universal ribosomal protein uL18 family. In terms of assembly, part of the 50S ribosomal subunit; part of the 5S rRNA/L5/L18/L25 subcomplex. Contacts the 5S and 23S rRNAs.

In terms of biological role, this is one of the proteins that bind and probably mediate the attachment of the 5S RNA into the large ribosomal subunit, where it forms part of the central protuberance. The polypeptide is Large ribosomal subunit protein uL18 (Rhizobium etli (strain ATCC 51251 / DSM 11541 / JCM 21823 / NBRC 15573 / CFN 42)).